The sequence spans 323 residues: Acetyl-coenzyme A carboxylase carboxyl transferase subunit alpha (323 aa).

Positions 39–293 (RLSKKSQQLT…RRALADSLRQ (255 aa)) constitute a CoA carboxyltransferase C-terminal domain.

This sequence belongs to the AccA family. Acetyl-CoA carboxylase is a heterohexamer composed of biotin carboxyl carrier protein (AccB), biotin carboxylase (AccC) and two subunits each of ACCase subunit alpha (AccA) and ACCase subunit beta (AccD).

The protein resides in the cytoplasm. The enzyme catalyses N(6)-carboxybiotinyl-L-lysyl-[protein] + acetyl-CoA = N(6)-biotinyl-L-lysyl-[protein] + malonyl-CoA. It participates in lipid metabolism; malonyl-CoA biosynthesis; malonyl-CoA from acetyl-CoA: step 1/1. Component of the acetyl coenzyme A carboxylase (ACC) complex. First, biotin carboxylase catalyzes the carboxylation of biotin on its carrier protein (BCCP) and then the CO(2) group is transferred by the carboxyltransferase to acetyl-CoA to form malonyl-CoA. The protein is Acetyl-coenzyme A carboxylase carboxyl transferase subunit alpha of Burkholderia vietnamiensis (strain G4 / LMG 22486) (Burkholderia cepacia (strain R1808)).